The primary structure comprises 276 residues: Bifunctional protein FolD (276 aa).

NADP(+) contacts are provided by residues 158–160 (NRS), S183, and I224.

This sequence belongs to the tetrahydrofolate dehydrogenase/cyclohydrolase family. In terms of assembly, homodimer.

It catalyses the reaction (6R)-5,10-methylene-5,6,7,8-tetrahydrofolate + NADP(+) = (6R)-5,10-methenyltetrahydrofolate + NADPH. The catalysed reaction is (6R)-5,10-methenyltetrahydrofolate + H2O = (6R)-10-formyltetrahydrofolate + H(+). Its pathway is one-carbon metabolism; tetrahydrofolate interconversion. In terms of biological role, catalyzes the oxidation of 5,10-methylenetetrahydrofolate to 5,10-methenyltetrahydrofolate and then the hydrolysis of 5,10-methenyltetrahydrofolate to 10-formyltetrahydrofolate. The sequence is that of Bifunctional protein FolD from Picrophilus torridus (strain ATCC 700027 / DSM 9790 / JCM 10055 / NBRC 100828 / KAW 2/3).